The primary structure comprises 318 residues: UDP-3-O-acylglucosamine N-acyltransferase 1 (318 aa).

H230 functions as the Proton acceptor in the catalytic mechanism.

This sequence belongs to the transferase hexapeptide repeat family. LpxD subfamily. In terms of assembly, homotrimer.

The catalysed reaction is a UDP-3-O-[(3R)-3-hydroxyacyl]-alpha-D-glucosamine + a (3R)-hydroxyacyl-[ACP] = a UDP-2-N,3-O-bis[(3R)-3-hydroxyacyl]-alpha-D-glucosamine + holo-[ACP] + H(+). The protein operates within bacterial outer membrane biogenesis; LPS lipid A biosynthesis. In terms of biological role, catalyzes the N-acylation of UDP-3-O-acylglucosamine using 3-hydroxyacyl-ACP as the acyl donor. Is involved in the biosynthesis of lipid A, a phosphorylated glycolipid that anchors the lipopolysaccharide to the outer membrane of the cell. In Sulfurimonas denitrificans (strain ATCC 33889 / DSM 1251) (Thiomicrospira denitrificans (strain ATCC 33889 / DSM 1251)), this protein is UDP-3-O-acylglucosamine N-acyltransferase 1.